Consider the following 370-residue polypeptide: Cytochrome b (370 aa).

4 helical membrane passes run 25 to 45, 69 to 90, 105 to 125, and 170 to 190; these read FGSM…FLAV, WMMQ…YIHI, WLSG…GYVL, and FFAL…LHVM. H75 and H89 together coordinate heme b. The heme b site is built by H174 and H188. H193 is a binding site for a ubiquinone. 4 helical membrane-spanning segments follow: residues 218–238, 280–300, 312–332, and 339–358; these read YKDL…ISFY, LGGA…PFTH, FMQL…WTAT, and FTMI…ISNP.

It belongs to the cytochrome b family. In terms of assembly, the cytochrome bc1 complex contains 3 respiratory subunits (MT-CYB, CYC1 and UQCRFS1), 2 core proteins (UQCRC1 and UQCRC2) and probably 6 low-molecular weight proteins. Heme b serves as cofactor.

The protein localises to the mitochondrion inner membrane. Its function is as follows. Component of the ubiquinol-cytochrome c reductase complex (complex III or cytochrome b-c1 complex) that is part of the mitochondrial respiratory chain. The b-c1 complex mediates electron transfer from ubiquinol to cytochrome c. Contributes to the generation of a proton gradient across the mitochondrial membrane that is then used for ATP synthesis. This is Cytochrome b (MT-CYB) from Corallus hortulanus enydris (Garden tree boa).